Reading from the N-terminus, the 147-residue chain is Transcription elongation factor Spt5 (147 aa).

Residues 91-122 (KGDVVEIIAGPFKGERAKVIRVDKHKEEVTLE) form the KOW domain.

It belongs to the archaeal Spt5 family. As to quaternary structure, heterodimer composed of Spt4 and Spt5. Interacts with RNA polymerase (RNAP). Forms a homodimer in solution.

In terms of biological role, stimulates transcription elongation. This is Transcription elongation factor Spt5 from Methanocaldococcus jannaschii (strain ATCC 43067 / DSM 2661 / JAL-1 / JCM 10045 / NBRC 100440) (Methanococcus jannaschii).